Here is a 353-residue protein sequence, read N- to C-terminus: 2-Hydroxyacid oxidase 2 (353 aa).

The region spanning 2-353 is the FMN hydroxy acid dehydrogenase domain; that stretch reads PLVCLTDFRE…NQDLIQFSRL (352 aa). FMN-binding positions include 77–79, Ser106, and Gln128; that span reads PTG. Tyr130 contacts a 2-oxocarboxylate. FMN is bound at residue Thr156. Arg165 contributes to the a 2-oxocarboxylate binding site. Position 224 (Lys224) interacts with FMN. His248 functions as the Proton acceptor in the catalytic mechanism. Arg251 provides a ligand contact to a 2-oxocarboxylate. Residues 279 to 283 and 302 to 303 contribute to the FMN site; these read DGGIR and GR. Residues 351-353 carry the Microbody targeting signal motif; the sequence is SRL.

Belongs to the FMN-dependent alpha-hydroxy acid dehydrogenase family. Homotetramer. FMN is required as a cofactor.

It is found in the peroxisome. It carries out the reaction a (2S)-2-hydroxycarboxylate + O2 = a 2-oxocarboxylate + H2O2. The catalysed reaction is 2-hydroxyhexadecanoate + O2 = 2-oxohexadecanoate + H2O2. It catalyses the reaction 2-hydroxyoctanoate + O2 = 2-oxooctanoate + H2O2. It participates in lipid metabolism; fatty acid metabolism. In terms of biological role, oxidase that catalyzes the oxidation of medium and long chain hydroxyacids such as 2-hydroxyhexadecanoate and 2-hydroxyoctanoate, to the correspondong 2-oxoacids. Its role in the oxidation of 2-hydroxy fatty acids may contribute to the general pathway of fatty acid alpha-oxidation. Active in vitro with the artificial electron acceptor 2,6-dichlorophenolindophenol (DCIP), but O2 is believed to be the physiological electron acceptor, leading to the production of H2O2. This chain is 2-Hydroxyacid oxidase 2 (HAO2), found in Bos taurus (Bovine).